A 529-amino-acid chain; its full sequence is Bifunctional purine biosynthesis protein PurH (529 aa).

The 148-residue stretch at 1 to 148 (MNNVRPIRRA…KNHKDTTIVV (148 aa)) folds into the MGS-like domain.

The protein belongs to the PurH family.

The enzyme catalyses (6R)-10-formyltetrahydrofolate + 5-amino-1-(5-phospho-beta-D-ribosyl)imidazole-4-carboxamide = 5-formamido-1-(5-phospho-D-ribosyl)imidazole-4-carboxamide + (6S)-5,6,7,8-tetrahydrofolate. It carries out the reaction IMP + H2O = 5-formamido-1-(5-phospho-D-ribosyl)imidazole-4-carboxamide. The protein operates within purine metabolism; IMP biosynthesis via de novo pathway; 5-formamido-1-(5-phospho-D-ribosyl)imidazole-4-carboxamide from 5-amino-1-(5-phospho-D-ribosyl)imidazole-4-carboxamide (10-formyl THF route): step 1/1. It functions in the pathway purine metabolism; IMP biosynthesis via de novo pathway; IMP from 5-formamido-1-(5-phospho-D-ribosyl)imidazole-4-carboxamide: step 1/1. The sequence is that of Bifunctional purine biosynthesis protein PurH from Shewanella frigidimarina (strain NCIMB 400).